The following is a 721-amino-acid chain: Polyribonucleotide nucleotidyltransferase (721 aa).

Mg(2+) is bound by residues D495 and D501. Residues 562-621 form the KH domain; the sequence is PRLLSFRIDPELIGTVIGPGGRTIKGITERTNTKIDIEDSGIVTIASHDGAAADEAQKII. Residues 631 to 699 enclose the S1 motif domain; that stretch reads GEVFSGSITR…NRGRINLTLR (69 aa). The interval 698 to 721 is disordered; it reads LRGVPQSGDGAGEEPQPTPVAPLS.

The protein belongs to the polyribonucleotide nucleotidyltransferase family. Mg(2+) is required as a cofactor.

The protein resides in the cytoplasm. The catalysed reaction is RNA(n+1) + phosphate = RNA(n) + a ribonucleoside 5'-diphosphate. Functionally, involved in mRNA degradation. Catalyzes the phosphorolysis of single-stranded polyribonucleotides processively in the 3'- to 5'-direction. This Parasynechococcus marenigrum (strain WH8102) protein is Polyribonucleotide nucleotidyltransferase.